A 222-amino-acid polypeptide reads, in one-letter code: Pyridoxine/pyridoxamine 5'-phosphate oxidase (222 aa).

Residues 16–19 (RVSY) and Lys75 each bind substrate. FMN is bound by residues 70-75 (RTVLCK), 85-86 (FT), Lys92, and Gln114. Positions 132, 136, and 140 each coordinate substrate. FMN contacts are provided by residues 149-150 (QS) and Trp195. A substrate-binding site is contributed by 201–203 (RLH). Residue Arg205 participates in FMN binding.

Belongs to the pyridoxamine 5'-phosphate oxidase family. Homodimer. The cofactor is FMN.

The enzyme catalyses pyridoxamine 5'-phosphate + O2 + H2O = pyridoxal 5'-phosphate + H2O2 + NH4(+). It catalyses the reaction pyridoxine 5'-phosphate + O2 = pyridoxal 5'-phosphate + H2O2. It functions in the pathway cofactor metabolism; pyridoxal 5'-phosphate salvage; pyridoxal 5'-phosphate from pyridoxamine 5'-phosphate: step 1/1. Its pathway is cofactor metabolism; pyridoxal 5'-phosphate salvage; pyridoxal 5'-phosphate from pyridoxine 5'-phosphate: step 1/1. Catalyzes the oxidation of either pyridoxine 5'-phosphate (PNP) or pyridoxamine 5'-phosphate (PMP) into pyridoxal 5'-phosphate (PLP). This Saccharopolyspora erythraea (strain ATCC 11635 / DSM 40517 / JCM 4748 / NBRC 13426 / NCIMB 8594 / NRRL 2338) protein is Pyridoxine/pyridoxamine 5'-phosphate oxidase.